Consider the following 476-residue polypeptide: UDP-N-acetylmuramate--L-alanine ligase (476 aa).

Position 125–131 (125–131) interacts with ATP; the sequence is GTHGKTT.

This sequence belongs to the MurCDEF family.

Its subcellular location is the cytoplasm. It carries out the reaction UDP-N-acetyl-alpha-D-muramate + L-alanine + ATP = UDP-N-acetyl-alpha-D-muramoyl-L-alanine + ADP + phosphate + H(+). It participates in cell wall biogenesis; peptidoglycan biosynthesis. In terms of biological role, cell wall formation. The chain is UDP-N-acetylmuramate--L-alanine ligase from Actinobacillus succinogenes (strain ATCC 55618 / DSM 22257 / CCUG 43843 / 130Z).